The sequence spans 102 residues: Large ribosomal subunit protein bL21 (102 aa).

It belongs to the bacterial ribosomal protein bL21 family. Part of the 50S ribosomal subunit. Contacts protein L20.

Functionally, this protein binds to 23S rRNA in the presence of protein L20. This chain is Large ribosomal subunit protein bL21, found in Bacillus subtilis (strain 168).